Here is a 411-residue protein sequence, read N- to C-terminus: Serine--tRNA ligase (411 aa).

226-228 is a binding site for L-serine; that stretch reads TSE. 257–259 lines the ATP pocket; sequence RKE. Residue Glu280 coordinates L-serine. 344–347 is an ATP binding site; the sequence is EISS. Residue Ser379 coordinates L-serine.

It belongs to the class-II aminoacyl-tRNA synthetase family. Type-1 seryl-tRNA synthetase subfamily. As to quaternary structure, homodimer. The tRNA molecule binds across the dimer.

It is found in the cytoplasm. The catalysed reaction is tRNA(Ser) + L-serine + ATP = L-seryl-tRNA(Ser) + AMP + diphosphate + H(+). It carries out the reaction tRNA(Sec) + L-serine + ATP = L-seryl-tRNA(Sec) + AMP + diphosphate + H(+). The protein operates within aminoacyl-tRNA biosynthesis; selenocysteinyl-tRNA(Sec) biosynthesis; L-seryl-tRNA(Sec) from L-serine and tRNA(Sec): step 1/1. Its function is as follows. Catalyzes the attachment of serine to tRNA(Ser). Is also able to aminoacylate tRNA(Sec) with serine, to form the misacylated tRNA L-seryl-tRNA(Sec), which will be further converted into selenocysteinyl-tRNA(Sec). The polypeptide is Serine--tRNA ligase (Campylobacter jejuni subsp. jejuni serotype O:23/36 (strain 81-176)).